Consider the following 336-residue polypeptide: uncharacterized protein (336 aa).

The ATP-grasp domain occupies Lys-123 to Asp-323.

The protein belongs to the D-alanine--D-alanine ligase family.

Functionally, could be involved in the biosynthesis of a cell wall component. This is an uncharacterized protein from Sinorhizobium fredii (strain NBRC 101917 / NGR234).